Consider the following 739-residue polypeptide: Xylosyl- and glucuronyltransferase LARGE2s (739 aa).

At 1 to 10 the chain is on the cytoplasmic side; it reads MLCSWRVKLK. Residues 11-31 form a helical; Signal-anchor for type II membrane protein membrane-spanning segment; sequence LLLATITLAVLLSWLYLFVGS. Residues 32–739 lie on the Lumenal side of the membrane; the sequence is LEYGRFLLLP…LKYLTAERNL (708 aa). Positions 80–105 are disordered; sequence AEGSDGNPQWAASAEDGPPLGGERNN. Residues N105, N131, and N217 are each glycosylated (N-linked (GlcNAc...) asparagine). The segment at 121–396 is xylosyltransferase activity; it reads LHVAIVCAGH…FLEYDGNLLR (276 aa). Residues D225 and D227 each coordinate Mn(2+). Residue N255 is glycosylated (N-linked (GlcNAc...) asparagine). Residues 397–739 are glucuronyltransferase activity; sequence RELFGCASLP…LKYLTAERNL (343 aa). Mn(2+) is bound by residues D546 and D548.

This sequence in the C-terminal section; belongs to the glycosyltransferase 49 family. In the N-terminal section; belongs to the glycosyltransferase 8 family. The cofactor is Mn(2+).

The protein resides in the golgi apparatus membrane. It catalyses the reaction 3-O-[beta-D-GlcA-(1-&gt;3)-beta-D-Xyl-(1-&gt;4)-Rib-ol-P-Rib-ol-P-3-beta-D-GalNAc-(1-&gt;3)-beta-D-GlcNAc-(1-&gt;4)-(O-6-P-alpha-D-Man)]-Thr-[protein] + UDP-alpha-D-xylose = 3-O-[alpha-D-Xyl-(1-&gt;3)-beta-D-GlcA-(1-&gt;4)-beta-D-Xyl-(1-&gt;4)-Rib-ol-P-Rib-ol-P-3-beta-D-GalNAc-(1-&gt;3)-beta-D-GlcNAc-(1-&gt;4)-(O-6-P-alpha-D-Man)]-Thr-[protein] + UDP + H(+). The catalysed reaction is 3-O-{(1-&gt;[3)-alpha-D-Xyl-(1-&gt;3)-beta-D-GlcA-(1-&gt;](n)-4)-beta-D-Xyl-(1-&gt;4)-Rib-ol-P-Rib-ol-P-3-beta-D-GalNAc-(1-&gt;3)-beta-D-GlcNAc-(1-&gt;4)-O-6-P-alpha-D-Man}-L-Thr-[protein] + UDP-alpha-D-glucuronate = 3-O-{beta-D-GlcA-(1-&gt;[3)-alpha-D-Xyl-(1-&gt;3)-beta-D-GlcA-(1-&gt;](n)-4)-beta-D-Xyl-(1-&gt;4)-Rib-ol-P-Rib-ol-P-3-beta-D-GalNAc-(1-&gt;3)-beta-D-GlcNAc-(1-&gt;4)-O-6-P-alpha-D-Man}-L-Thr-[protein] + UDP + H(+). It carries out the reaction 3-O-{beta-D-GlcA-(1-&gt;[3)-alpha-D-Xyl-(1-&gt;3)-beta-D-GlcA-(1-&gt;](n)-4)-beta-D-Xyl-(1-&gt;4)-Rib-ol-P-Rib-ol-P-3-beta-D-GalNAc-(1-&gt;3)-beta-D-GlcNAc-(1-&gt;4)-O-6-P-alpha-D-Man}-L-Thr-[protein] + UDP-alpha-D-xylose = 3-O-{(1-&gt;[3)-alpha-D-Xyl-(1-&gt;3)-beta-D-GlcA-(1-&gt;](n+1)-4)-beta-D-Xyl-(1-&gt;4)-Rib-ol-P-Rib-ol-P-3-beta-D-GalNAc-(1-&gt;3)-beta-D-GlcNAc-(1-&gt;4)-O-6-P-alpha-D-Man}-L-Thr-[protein] + UDP + H(+). The protein operates within protein modification; protein glycosylation. Functionally, bifunctional glycosyltransferase with both alpha-1,3-xylosyltransferase and beta-1,3-glucuronyltransferase activities involved in the maturation of alpha-dystroglycan (DAG1) by glycosylation leading to DAG1 binding to laminin G-like domain-containing extracellular proteins with high affinity and in a phosphorylated-O-mannosyl trisaccharide dependent manner. Elongates the glucuronyl-beta-1,4-xylose-beta disaccharide primer structure by adding repeating units [-3-Xylose-alpha-1,3-GlcA-beta-1-] to produce a heteropolysaccharide. Supports the maturation of DAG1 more effectively than LARGE1. In addition, can modify both heparan sulfate (HS)- and chondroitin/dermatan sulfate (CS/DS)-proteoglycans (PGs), namely GPC4, with a glycosaminoglycan (GAG)-like polysaccharide composed of xylose and glucuronic acid to confer laminin binding. In Gallus gallus (Chicken), this protein is Xylosyl- and glucuronyltransferase LARGE2s.